Reading from the N-terminus, the 363-residue chain is Dual-specificity RNA methyltransferase RlmN (363 aa).

Catalysis depends on E102, which acts as the Proton acceptor. The region spanning 108–349 (EKKRATLCVS…KNRGQDIGAA (242 aa)) is the Radical SAM core domain. Residues C115 and C350 are joined by a disulfide bond. C122, C126, and C129 together coordinate [4Fe-4S] cluster. Residues 174–175 (GE), S206, 228–230 (SLH), and N307 each bind S-adenosyl-L-methionine. C350 (S-methylcysteine intermediate) is an active-site residue.

Belongs to the radical SAM superfamily. RlmN family. It depends on [4Fe-4S] cluster as a cofactor.

The protein resides in the cytoplasm. It catalyses the reaction adenosine(2503) in 23S rRNA + 2 reduced [2Fe-2S]-[ferredoxin] + 2 S-adenosyl-L-methionine = 2-methyladenosine(2503) in 23S rRNA + 5'-deoxyadenosine + L-methionine + 2 oxidized [2Fe-2S]-[ferredoxin] + S-adenosyl-L-homocysteine. The enzyme catalyses adenosine(37) in tRNA + 2 reduced [2Fe-2S]-[ferredoxin] + 2 S-adenosyl-L-methionine = 2-methyladenosine(37) in tRNA + 5'-deoxyadenosine + L-methionine + 2 oxidized [2Fe-2S]-[ferredoxin] + S-adenosyl-L-homocysteine. Specifically methylates position 2 of adenine 2503 in 23S rRNA and position 2 of adenine 37 in tRNAs. m2A2503 modification seems to play a crucial role in the proofreading step occurring at the peptidyl transferase center and thus would serve to optimize ribosomal fidelity. The protein is Dual-specificity RNA methyltransferase RlmN of Buchnera aphidicola subsp. Schizaphis graminum (strain Sg).